Reading from the N-terminus, the 205-residue chain is Thiamine-phosphate synthase (205 aa).

Residues 37 to 41 (QVREK) and asparagine 69 each bind 4-amino-2-methyl-5-(diphosphooxymethyl)pyrimidine. Mg(2+)-binding residues include aspartate 70 and aspartate 89. Residue serine 108 participates in 4-amino-2-methyl-5-(diphosphooxymethyl)pyrimidine binding. Residue 134 to 136 (TGS) participates in 2-[(2R,5Z)-2-carboxy-4-methylthiazol-5(2H)-ylidene]ethyl phosphate binding. Lysine 137 contributes to the 4-amino-2-methyl-5-(diphosphooxymethyl)pyrimidine binding site. Residues glycine 165 and 185 to 186 (IS) each bind 2-[(2R,5Z)-2-carboxy-4-methylthiazol-5(2H)-ylidene]ethyl phosphate.

The protein belongs to the thiamine-phosphate synthase family. Mg(2+) serves as cofactor.

It carries out the reaction 2-[(2R,5Z)-2-carboxy-4-methylthiazol-5(2H)-ylidene]ethyl phosphate + 4-amino-2-methyl-5-(diphosphooxymethyl)pyrimidine + 2 H(+) = thiamine phosphate + CO2 + diphosphate. The catalysed reaction is 2-(2-carboxy-4-methylthiazol-5-yl)ethyl phosphate + 4-amino-2-methyl-5-(diphosphooxymethyl)pyrimidine + 2 H(+) = thiamine phosphate + CO2 + diphosphate. It catalyses the reaction 4-methyl-5-(2-phosphooxyethyl)-thiazole + 4-amino-2-methyl-5-(diphosphooxymethyl)pyrimidine + H(+) = thiamine phosphate + diphosphate. The protein operates within cofactor biosynthesis; thiamine diphosphate biosynthesis; thiamine phosphate from 4-amino-2-methyl-5-diphosphomethylpyrimidine and 4-methyl-5-(2-phosphoethyl)-thiazole: step 1/1. In terms of biological role, condenses 4-methyl-5-(beta-hydroxyethyl)thiazole monophosphate (THZ-P) and 2-methyl-4-amino-5-hydroxymethyl pyrimidine pyrophosphate (HMP-PP) to form thiamine monophosphate (TMP). The chain is Thiamine-phosphate synthase from Clostridium botulinum (strain 657 / Type Ba4).